A 398-amino-acid chain; its full sequence is ATP-dependent RNA helicase eIF4A (398 aa).

Positions 25–53 match the Q motif motif; sequence DSFDSMDLKPELLRGVYAYGFERPSAIQQ. One can recognise a Helicase ATP-binding domain in the interval 56-226; sequence IKPIIAGHDV…TKFMRDPIRI (171 aa). Position 69–76 (69–76) interacts with ATP; sequence AQSGTGKT. Positions 174–177 match the DEAD box motif; the sequence is DEAD. The 162-residue stretch at 237–398 folds into the Helicase C-terminal domain; that stretch reads GIKQFYIAVE…EMPMNVADLI (162 aa).

It belongs to the DEAD box helicase family. eIF4A subfamily. Component of the eIF4F complex, which composition varies with external and internal environmental conditions. It is composed of at least eIF4A, eIF4E and eIF4G.

It localises to the cytoplasm. The catalysed reaction is ATP + H2O = ADP + phosphate + H(+). Functionally, ATP-dependent RNA helicase which is a subunit of the eIF4F complex involved in cap recognition and is required for mRNA binding to ribosome. In the current model of translation initiation, eIF4A unwinds RNA secondary structures in the 5'-UTR of mRNAs which is necessary to allow efficient binding of the small ribosomal subunit, and subsequent scanning for the initiator codon. This Aspergillus niger (strain ATCC MYA-4892 / CBS 513.88 / FGSC A1513) protein is ATP-dependent RNA helicase eIF4A (tif1).